The primary structure comprises 493 residues: MAENLVNTFVTQVIENSDYEELDRIYLTNKVFTLVGEGVADVETDSSELIDLKDQLLQAGVKAGSVGELNEEQDIIGAQLMDLITPRPSVVNRNFWDTYKSNPEQAIADFYAQSKRNDYVKVKAIAQNIAYKAPTKYGDLEITINLSKPEKDPKAIAAAKNAVASDYPKCQLCMENEGYLGRINHPARSNHRVVRFQMEDKEWGFQYSPYAYFNEHSIFFYGKHEPMHISPLTFGRLLTIVEAFPGYFAGSNADLPIVGGSILTHEHYQGGRHTFPMEVAGIKEKVSFDGYSDVEAGIVNWPMSVLRLRSEDKERLIALATKILNCWRGYSDEKAGVLAESDGQPHHTITPIARRKDGKFELDLVLRDNQTSEEYPDGIYHPHKDVQHIKKENIGLIEVMGLAILPPRLKTELKDVEDYLLGQGNQVAPIHQEWADELKAQNPNITAEEVTEVVRQSVADIFARVLEDAGVYKTNSEGLDQFKAFVDFVNLAD.

This sequence belongs to the galactose-1-phosphate uridylyltransferase type 2 family.

It localises to the cytoplasm. The catalysed reaction is alpha-D-galactose 1-phosphate + UDP-alpha-D-glucose = alpha-D-glucose 1-phosphate + UDP-alpha-D-galactose. Its pathway is carbohydrate metabolism; galactose metabolism. The chain is Galactose-1-phosphate uridylyltransferase from Streptococcus thermophilus (strain CNRZ 1066).